A 290-amino-acid chain; its full sequence is MYSFLFTKMHGLGNSYIYVDLFRETLPEEDLPAIARSVADVHTGIGSDGLILICPSEQAPVKMRIFNSDGSEGKNCGNGLRCVAKYAYEHGIVRDRSFLIETLSGLVEAEVTVENGEVTSVTIDMGEPRLRRSAIPMTGPEAEQVVAESFAIDGREYEITAVSMGNPHVIFYVDDIEKAPVTTLGPVVEKDARFPEGVNVEFVEVVSERELHFRVWERGSGVTQACGTGACAAVVASVLNGKTARGVETVVHLAGGDLTITWGHDGKVRMTGPAETVCTGVYYYRGGQNG.

Substrate-binding residues include asparagine 14 and asparagine 67. Cysteine 76 acts as the Proton donor in catalysis. Substrate-binding positions include 77 to 78 (GN), asparagine 166, asparagine 199, and 217 to 218 (ER). The active-site Proton acceptor is cysteine 226. Substrate is bound at residue 227 to 228 (GT).

The protein belongs to the diaminopimelate epimerase family. In terms of assembly, homodimer.

The protein resides in the cytoplasm. The catalysed reaction is (2S,6S)-2,6-diaminopimelate = meso-2,6-diaminopimelate. It participates in amino-acid biosynthesis; L-lysine biosynthesis via DAP pathway; DL-2,6-diaminopimelate from LL-2,6-diaminopimelate: step 1/1. In terms of biological role, catalyzes the stereoinversion of LL-2,6-diaminopimelate (L,L-DAP) to meso-diaminopimelate (meso-DAP), a precursor of L-lysine and an essential component of the bacterial peptidoglycan. The polypeptide is Diaminopimelate epimerase (Geobacillus thermodenitrificans (strain NG80-2)).